A 255-amino-acid chain; its full sequence is 1-(5-phosphoribosyl)-5-[(5-phosphoribosylamino)methylideneamino] imidazole-4-carboxamide isomerase (255 aa).

The Proton acceptor role is filled by D8. D129 serves as the catalytic Proton donor.

The protein belongs to the HisA/HisF family.

The protein resides in the cytoplasm. It carries out the reaction 1-(5-phospho-beta-D-ribosyl)-5-[(5-phospho-beta-D-ribosylamino)methylideneamino]imidazole-4-carboxamide = 5-[(5-phospho-1-deoxy-D-ribulos-1-ylimino)methylamino]-1-(5-phospho-beta-D-ribosyl)imidazole-4-carboxamide. It functions in the pathway amino-acid biosynthesis; L-histidine biosynthesis; L-histidine from 5-phospho-alpha-D-ribose 1-diphosphate: step 4/9. This Synechococcus sp. (strain CC9902) protein is 1-(5-phosphoribosyl)-5-[(5-phosphoribosylamino)methylideneamino] imidazole-4-carboxamide isomerase.